A 318-amino-acid polypeptide reads, in one-letter code: NADH-ubiquinone oxidoreductase chain 1 (318 aa).

8 helical membrane passes run 2 to 22 (FMIN…FLTL), 68 to 88 (ISMF…MWTP), 100 to 120 (LGVL…LWSG), 146 to 166 (LAII…PTLI), 171 to 191 (HMWL…STLA), 222 to 242 (LFFL…TILF), 253 to 273 (ELYT…FLWV), and 293 to 313 (FLPL…ITAG).

It belongs to the complex I subunit 1 family. In terms of assembly, core subunit of respiratory chain NADH dehydrogenase (Complex I) which is composed of 45 different subunits.

It is found in the mitochondrion inner membrane. The enzyme catalyses a ubiquinone + NADH + 5 H(+)(in) = a ubiquinol + NAD(+) + 4 H(+)(out). Functionally, core subunit of the mitochondrial membrane respiratory chain NADH dehydrogenase (Complex I) which catalyzes electron transfer from NADH through the respiratory chain, using ubiquinone as an electron acceptor. Essential for the catalytic activity and assembly of complex I. This is NADH-ubiquinone oxidoreductase chain 1 (MT-ND1) from Hipposideros diadema (Diadem leaf-nosed bat).